The sequence spans 1368 residues: DNA-directed RNA polymerase subunit beta (1368 aa).

The protein belongs to the RNA polymerase beta chain family. The RNAP catalytic core consists of 2 alpha, 1 beta, 1 beta' and 1 omega subunit. When a sigma factor is associated with the core the holoenzyme is formed, which can initiate transcription.

It catalyses the reaction RNA(n) + a ribonucleoside 5'-triphosphate = RNA(n+1) + diphosphate. Its function is as follows. DNA-dependent RNA polymerase catalyzes the transcription of DNA into RNA using the four ribonucleoside triphosphates as substrates. This is DNA-directed RNA polymerase subunit beta from Ralstonia nicotianae (strain ATCC BAA-1114 / GMI1000) (Ralstonia solanacearum).